Consider the following 503-residue polypeptide: D-xylose-proton symporter-like 1 (503 aa).

The tract at residues 1-23 (MGFDPENQSISSVGQVVGDSSSG) is disordered. Over residues 8–23 (QSISSVGQVVGDSSSG) the composition is skewed to low complexity. A run of 12 helical transmembrane segments spans residues 51–73 (FLFPALGALLFGYEIGATSCAIM), 95–115 (IITSGSLYGALIGSIVAFSVA), 129–149 (FLYLVGAIVTVVAPVFSILII), 152–172 (VTYGMGIGLTMHAAPMYIAET), 190–210 (VLGMVGGYGIGSLWITVISGW), 213–233 (MYATILPFPVIMGTGMCWLPA), 305–325 (ALTIAGGLVLFQQITGQPSVL), 346–366 (ISILLGLLKLVMTGVSVIVID), 374–394 (LLCGVSGMVISLFLLGSYYMF), 405–425 (ALLLYVGCYQLSFGPIGWLMI), 437–457 (GISLAVLVNFGANALVTFAFS), and 467–487 (ILFCAFGVICVVSLFFIYYIV).

This sequence belongs to the major facilitator superfamily. Sugar transporter (TC 2.A.1.1) family.

It localises to the membrane. In Arabidopsis thaliana (Mouse-ear cress), this protein is D-xylose-proton symporter-like 1.